Consider the following 353-residue polypeptide: Paraneoplastic antigen Ma1 (353 aa).

Belongs to the PNMA family. In terms of tissue distribution, testis- and brain-specific. In some cancer patients, specifically expressed by paraneoplastic tumor cells.

It localises to the nucleus. It is found in the nucleolus. The chain is Paraneoplastic antigen Ma1 (PNMA1) from Homo sapiens (Human).